The primary structure comprises 582 residues: Hydrogen peroxide stress regulator 1 (582 aa).

Disordered stretches follow at residues 24-55 (SPFAPAQSSSPLPSNSCREYSLPSHPSTHNSS), 107-154 (YPSA…GISK), 347-366 (TSYNDTPQQSVTGSYNSGET), and 375-422 (NTSG…GGKS). Residues 107–125 (YPSASFSTSQHPSQVYNDG) show a composition bias toward polar residues. A compositionally biased stretch (low complexity) spans 126–143 (STLNSNNTTQQLNNNNGF). Positions 375 to 392 (NTSGRSPNSMEATEQIGT) are enriched in polar residues. The segment at 423 to 446 (FVCPECSKKFKRSEHLRRHIRSLH) adopts a C2H2-type 1 zinc-finger fold. The C2H2-type 2; atypical zinc-finger motif lies at 452–473 (FVCICGKRFSRRDNLRQHERLH).

The protein resides in the nucleus. Its function is as follows. Transcription factor that globally supports gene expression in response to hydrogen peroxide. The chain is Hydrogen peroxide stress regulator 1 (hsr1) from Schizosaccharomyces pombe (strain 972 / ATCC 24843) (Fission yeast).